The following is a 225-amino-acid chain: Pathogenesis-related thaumatin-like protein 3.8 (225 aa).

The signal sequence occupies residues 1-26; it reads MAKVSDLALLLVAGMAISLYIQETGA. 8 disulfides stabilise this stretch: C35–C224, C76–C86, C91–C97, C139–C213, C144–C197, C152–C162, C166–C175, and C176–C184. N188 carries N-linked (GlcNAc...) asparagine glycosylation.

It belongs to the thaumatin family.

May be involved in disease resistance. The sequence is that of Pathogenesis-related thaumatin-like protein 3.8 from Cryptomeria japonica (Japanese cedar).